Here is a 235-residue protein sequence, read N- to C-terminus: Probable inactive serine protease 37 (235 aa).

The N-terminal stretch at 1–19 (MKFTFCLTVLAGTFFSAHS) is a signal peptide. A Peptidase S1 domain is found at 20-233 (SVQKDDPSPY…YVSWIESTTK (214 aa)). 3 cysteine pairs are disulfide-bonded: Cys40/Cys56, Cys131/Cys198, and Cys163/Cys177.

It belongs to the peptidase S1 family.

The protein resides in the cytoplasmic vesicle. It localises to the secretory vesicle. Its subcellular location is the acrosome. It is found in the secreted. Plays a role in male fertility. May have a role in sperm migration or binding to zona-intact eggs. Involved in the activation of the proacrosin/acrosin system. The sequence is that of Probable inactive serine protease 37 from Bos taurus (Bovine).